The sequence spans 155 residues: Effector protein PevD1 (155 aa).

An N-terminal signal peptide occupies residues 1–18 (MQFTLAAAAALFGASALA). One can recognise an AA1-like domain in the interval 33–148 (NMYENIDIAD…NPTTIVIDSL (116 aa)). Disulfide bonds link C70/C84 and C125/C135.

As to quaternary structure, monomer. Interacts with Arabidopsis thaliana NRP.

It localises to the secreted. Its function is as follows. Effector protein. Elicits a hypersensitive response (HR) in tobacco plants (N.tabacum) and cotton (G.hirsutum). Boosts systemic acquired resistance (SAR) to tobacco mosaic virus (TMV) infection in N.tabacum and to V.dhaliae infection in primed cotton seedlings. The protein is Effector protein PevD1 of Verticillium dahliae (Verticillium wilt).